The following is a 480-amino-acid chain: Adenosylhomocysteinase (480 aa).

Residues Thr-63, Asp-142, and Glu-203 each coordinate substrate. NAD(+) is bound at residue 204–206 (TTT). Residues Lys-233 and Asp-237 each contribute to the substrate site. Residues Asn-238, 267 to 272 (GYGDVG), Glu-290, Asn-325, 346 to 348 (IGH), and Asn-394 contribute to the NAD(+) site.

It belongs to the adenosylhomocysteinase family. The cofactor is NAD(+).

The protein resides in the cytoplasm. The enzyme catalyses S-adenosyl-L-homocysteine + H2O = L-homocysteine + adenosine. It participates in amino-acid biosynthesis; L-homocysteine biosynthesis; L-homocysteine from S-adenosyl-L-homocysteine: step 1/1. May play a key role in the regulation of the intracellular concentration of adenosylhomocysteine. The polypeptide is Adenosylhomocysteinase (Xanthomonas euvesicatoria pv. vesicatoria (strain 85-10) (Xanthomonas campestris pv. vesicatoria)).